The chain runs to 416 residues: Enolase (416 aa).

Gln-162 provides a ligand contact to (2R)-2-phosphoglycerate. Glu-204 acts as the Proton donor in catalysis. Residues Asp-241, Glu-282, and Asp-309 each contribute to the Mg(2+) site. 4 residues coordinate (2R)-2-phosphoglycerate: Lys-334, Arg-363, Ser-364, and Lys-385. Lys-334 acts as the Proton acceptor in catalysis.

The protein belongs to the enolase family. It depends on Mg(2+) as a cofactor.

It localises to the cytoplasm. Its subcellular location is the secreted. The protein localises to the cell surface. It catalyses the reaction (2R)-2-phosphoglycerate = phosphoenolpyruvate + H2O. Its pathway is carbohydrate degradation; glycolysis; pyruvate from D-glyceraldehyde 3-phosphate: step 4/5. Its function is as follows. Catalyzes the reversible conversion of 2-phosphoglycerate (2-PG) into phosphoenolpyruvate (PEP). It is essential for the degradation of carbohydrates via glycolysis. This is Enolase from Campylobacter concisus (strain 13826).